Here is an 856-residue protein sequence, read N- to C-terminus: MEAALLVCQYTIQSLIHLTGEDPGFFNVEIPEFPFYPTCNVCTADVNVTINFDVGGKKHQLDLDFGQLTPHTKAVYQPRGAFGGSENATNLFLLELLGAGELALTMRSKKLPINVTTGEEQQVSLESVDVYFQDVFGTMWCHHAEMQNPVYLIPETVPYIKWDNCNSTNITAVVRAQGLDVTLPLSLPTSAQDSNFSVKTQMLGNEIDIECIMEDGEISQVLPGDNKFNITCSGYESHVPSGGILTSTSPVVTPIPGTGYAYSLRLTPRPVSRFLGNNSILYVFYSGNGPKASGGDYCIQSNIVFSDEIPASQDMPTNTTDITYVGDNATYSVPMVTSEDANSPNVTVTAFWAWPNNTETDFKCKWTLTSGTPSGCENISGAFASNRTFDITVSGLGTAPKTLIITRTATNATTTTHKVIFSKAPESTTTSPTSNTTGFAAPNTTTGLPSSTHVPTNLTAPASTGPTVSTADVTSPTPAGTTSGASPVTPSPSPRDNGTESKAPDMTSPTPAVTTPTPNATSPTSAVTTPTPNATSPTLGKTSPTSAVTTPTPNATSPTSAVTTPTPNATGPTVGETSPQANTTNHTLGGTSSTPVVTSQPKNATSAVTTGQHNITSSSTSSMSLRPSSISETTSHMPLLTSAHPTGGENITQVTPASTSTHHVSTSSPAPRPGTTSQASGPGNSSTSTKPGEVNVTKGTPPKNATSPQAPSGQKTAVPTVTSTGGKANSTTGGKHTTGHGARTSTEPTTDYGGDSTTPRTRYNATTYLPPSTSSELRPRWTFTSPPVTTAQATVPVPPTSQPRFSNLSMLVLQWASLAVLTLLLLLVMADCAFRRNLSTSHTYTTPPYDDAETYV.

Over Met-1–Ser-809 the chain is Virion surface. Residues Asn-47, Asn-87, Asn-114, Asn-166, Asn-169, Asn-195, Asn-229, Asn-277, Asn-318, Asn-328, Asn-345, Asn-356, Asn-378, Asn-386, Asn-411, Asn-435, Asn-443, Asn-457, Asn-497, Asn-519, Asn-533, Asn-554, Asn-568, Asn-582, Asn-585, Asn-603, and Asn-614 are each glycosylated (N-linked (GlcNAc...) asparagine; by host). Residues Phe-421–Pro-779 form a disordered region. Residues Ser-427–Thr-437 are compositionally biased toward low complexity. Residues Pro-442–Val-488 show a composition bias toward polar residues. Residues Thr-507–Thr-570 are compositionally biased toward low complexity. Over residues Gly-575–Thr-616 the composition is skewed to polar residues. Residues Ser-617–Ser-631 show a composition bias toward low complexity. Residue Asn-650 is glycosylated (N-linked (GlcNAc...) asparagine; by host). The segment covering Val-654–Pro-669 has biased composition (low complexity). The segment covering Gly-674 to Lys-690 has biased composition (polar residues). 4 N-linked (GlcNAc...) asparagine; by host glycosylation sites follow: Asn-684, Asn-695, Asn-704, and Asn-729. A compositionally biased stretch (polar residues) spans Lys-703–Ser-730. Low complexity predominate over residues Thr-731–Gly-741. Residues Arg-743–Glu-776 show a composition bias toward polar residues. N-linked (GlcNAc...) asparagine; by host glycans are attached at residues Asn-764 and Asn-807. Residues Met-810–Ala-830 traverse the membrane as a helical segment. The Intravirion segment spans residues Asp-831–Val-856.

This sequence belongs to the Epstein-Barr GP350 family. As to quaternary structure, interacts with host CR2. Post-translationally, extensively glycosylated.

It is found in the virion membrane. The protein localises to the host membrane. Functionally, initiates virion attachment to host B-lymphocyte cell, leading to virus entry. Acts by binding to host CR2 at the surface of B-lymphocytes, facilitating the binding of viral glycoprotein gp42 to HLA class II molecules. Attachment triggers virion-host membrane fusion and invasion of the host cell. The chain is Envelope glycoprotein GP350 from Homo sapiens (Human).